The primary structure comprises 146 residues: Holo-[acyl-carrier-protein] synthase (146 aa).

Positions 9 and 63 each coordinate Mg(2+).

This sequence belongs to the P-Pant transferase superfamily. AcpS family. Mg(2+) serves as cofactor.

Its subcellular location is the cytoplasm. The catalysed reaction is apo-[ACP] + CoA = holo-[ACP] + adenosine 3',5'-bisphosphate + H(+). Transfers the 4'-phosphopantetheine moiety from coenzyme A to a Ser of acyl-carrier-protein. This chain is Holo-[acyl-carrier-protein] synthase, found in Burkholderia ambifaria (strain MC40-6).